A 172-amino-acid polypeptide reads, in one-letter code: R-phycocyanin beta subunit (172 aa).

Asn72 carries the N4-methylasparagine modification. Cys82 serves as a coordination point for (2R,3E)-phycocyanobilin. Cys153 contacts (2R,3E)-phycoerythrobilin.

Belongs to the phycobiliprotein family. In terms of assembly, heterodimer of an alpha and a beta subunit, which further assembles into trimers and the trimers into hexamers. Contains two covalently linked bilin chromophores.

It is found in the cellular thylakoid membrane. Functionally, light-harvesting photosynthetic bile pigment-protein from the phycobiliprotein complex (phycobilisome, PBS). Phycocyanin is the major phycobiliprotein in the PBS rod. The protein is R-phycocyanin beta subunit (rpcB) of Synechococcus sp. (strain WH7803).